We begin with the raw amino-acid sequence, 258 residues long: Regulatory protein RecX (258 aa).

This sequence belongs to the RecX family.

The protein localises to the cytoplasm. Its function is as follows. Modulates RecA activity. The polypeptide is Regulatory protein RecX (Streptococcus mutans serotype c (strain ATCC 700610 / UA159)).